Here is a 146-residue protein sequence, read N- to C-terminus: Large ribosomal subunit protein bL9 (146 aa).

Belongs to the bacterial ribosomal protein bL9 family.

Functionally, binds to the 23S rRNA. This chain is Large ribosomal subunit protein bL9, found in Deinococcus geothermalis (strain DSM 11300 / CIP 105573 / AG-3a).